Consider the following 507-residue polypeptide: Probable D-lactate dehydrogenase, mitochondrial (507 aa).

Residues 1-52 constitute a mitochondrion transit peptide; it reads MARLLRSATWELFPWRGYCSQKAKGELCRDFVEALKAVVGGSHVSTAAVVRE. Position 36 is an N6-acetyllysine (Lys-36). Residues 62 to 265 form the FAD-binding PCMH-type domain; that stretch reads RCEPPDAVVW…TATTLRLHPA (204 aa). Lys-315 carries the post-translational modification N6-acetyllysine. The residue at position 358 (Lys-358) is an N6-acetyllysine; alternate. Position 358 is an N6-succinyllysine; alternate (Lys-358). Lys-445 and Lys-472 each carry N6-acetyllysine.

This sequence belongs to the FAD-binding oxidoreductase/transferase type 4 family. In terms of assembly, interacts with CSRP3. It depends on FAD as a cofactor. In terms of tissue distribution, expressed moderately in heart and liver and at lower levels in skeletal muscle and kidney.

The protein localises to the mitochondrion. The catalysed reaction is (R)-lactate + 2 Fe(III)-[cytochrome c] = 2 Fe(II)-[cytochrome c] + pyruvate + 2 H(+). Its function is as follows. Involved in D-lactate, but not L-lactate catabolic process. This is Probable D-lactate dehydrogenase, mitochondrial from Homo sapiens (Human).